We begin with the raw amino-acid sequence, 442 residues long: MRLSRYFLPILKENPREAEIVSHRLMLRAGMIRQQGQGSFSWLPLGKRVLDKVCQIIREEQNRAGALEILMPTIQSADLWRESGRYNDYGKEMLRIKDRQDRDMLYGPTNEEMVTEIFRAYVKSYKDLPLNLYHIQWKFRDEVRPRFGVMRSREFLMKDAYSFDLDFEGARSAYNRMFVSYLRTFTRMGLQAIPMRADTGPIGGDLSHEFIILADTGESQVFCHRDYLSLAVPGANTDFANDGEIADIVKTWTTPYAATDEMHDEAAWEKVPESDKVSARGIEVGHIFHFGEKYSKPMGAKVTGPDGKDHFASGGSYGIGPSRLVAAIIEASHDENGIIWPDAVAPFDIGLINMKVGDADCDRVSEELNAAFTAAGKDVLYDDTDQRPGGKFATADLIGLPWQVIVGPRGVAAGEVEIKNRRTGERETLPIADAKKRFGVAA.

The protein belongs to the class-II aminoacyl-tRNA synthetase family. ProS type 2 subfamily. As to quaternary structure, homodimer.

It is found in the cytoplasm. It catalyses the reaction tRNA(Pro) + L-proline + ATP = L-prolyl-tRNA(Pro) + AMP + diphosphate. Its function is as follows. Catalyzes the attachment of proline to tRNA(Pro) in a two-step reaction: proline is first activated by ATP to form Pro-AMP and then transferred to the acceptor end of tRNA(Pro). This chain is Proline--tRNA ligase, found in Mesorhizobium japonicum (strain LMG 29417 / CECT 9101 / MAFF 303099) (Mesorhizobium loti (strain MAFF 303099)).